The following is a 72-amino-acid chain: Translation initiation factor IF-1 1 (72 aa).

The 72-residue stretch at 1–72 (MAKEDRIEMQ…SRARIIFRAK (72 aa)) folds into the S1-like domain.

It belongs to the IF-1 family. As to quaternary structure, component of the 30S ribosomal translation pre-initiation complex which assembles on the 30S ribosome in the order IF-2 and IF-3, IF-1 and N-formylmethionyl-tRNA(fMet); mRNA recruitment can occur at any time during PIC assembly.

The protein localises to the cytoplasm. Its function is as follows. One of the essential components for the initiation of protein synthesis. Stabilizes the binding of IF-2 and IF-3 on the 30S subunit to which N-formylmethionyl-tRNA(fMet) subsequently binds. Helps modulate mRNA selection, yielding the 30S pre-initiation complex (PIC). Upon addition of the 50S ribosomal subunit IF-1, IF-2 and IF-3 are released leaving the mature 70S translation initiation complex. The sequence is that of Translation initiation factor IF-1 1 from Methylobacillus flagellatus (strain ATCC 51484 / DSM 6875 / VKM B-1610 / KT).